The following is a 633-amino-acid chain: Probable potassium transport system protein Kup (633 aa).

12 helical membrane passes run 21–41, 61–81, 112–132, 149–169, 176–196, 217–237, 258–278, 290–310, 348–368, 377–397, 398–418, and 430–450; these read MLVA…LYTL, ILSL…MMFV, LLVV…MITP, GIDH…FLIQ, IGIL…ALGV, FFMV…LALT, WFLL…ALLL, LLAP…ATVI, IYIG…VIGF, AYGV…SAVM, LLLW…FLLV, and IVQG…LMTT.

It belongs to the HAK/KUP transporter (TC 2.A.72) family.

It localises to the cell inner membrane. It carries out the reaction K(+)(in) + H(+)(in) = K(+)(out) + H(+)(out). Functionally, transport of potassium into the cell. Likely operates as a K(+):H(+) symporter. In Pseudomonas fluorescens (strain Pf0-1), this protein is Probable potassium transport system protein Kup.